A 124-amino-acid chain; its full sequence is Glutaredoxin-2 (124 aa).

Cys13 and Cys16 are joined by a disulfide.

Belongs to the glutaredoxin family. In terms of assembly, homodimer.

Its subcellular location is the host cytoplasm. Its function is as follows. Glutaredoxin necessary for virion morphogenesis and virus replication. Functions as a thiol-disulfide transfer protein between membrane-associated OPG128 and substrates OPG095 or OPG053. The complete pathway for formation of disulfide bonds in intracellular virion membrane proteins sequentially involves oxidation of OPG072, OPG128 and OPG088. Exhibit thioltransferase and dehydroascorbate reductase activities in vitro. In Mus musculus (Mouse), this protein is Glutaredoxin-2 (OPG088).